The primary structure comprises 269 residues: Integral membrane protein 2C (269 aa).

Phosphothreonine is present on Thr39. A helical; Signal-anchor for type II membrane protein transmembrane segment spans residues 57–77 (VGGVCYLSMGMVVLLMGLVFA). Positions 138–232 (FGGGDPADII…LCNGKDTYRL (95 aa)) constitute a BRICHOS domain. Cys165 and Cys224 form a disulfide bridge. An N-linked (GlcNAc...) asparagine glycan is attached at Asn171.

Belongs to the ITM2 family. In terms of assembly, interacts with BACE1. Interacts with APP. Interacts with STMN2. Type I membrane-bound, as well as soluble, furin has a pre-eminent role in ITM2C proteolytic processing. PCSK7 and PCSK5 may also be involved although to a lesser extent. The soluble form of PCSK7 is incapable of processing ITM2C. Fails to undergo shedding by ADAM10 and intramembrane cleavage by SPPL2B.

The protein localises to the lysosome membrane. The protein resides in the cell membrane. Negative regulator of amyloid-beta peptide production. May inhibit the processing of APP by blocking its access to alpha- and beta-secretase. Binding to the beta-secretase-cleaved APP C-terminal fragment is negligible, suggesting that ITM2C is a poor gamma-secretase cleavage inhibitor. May play a role in TNF-induced cell death and neuronal differentiation. This Mus musculus (Mouse) protein is Integral membrane protein 2C (Itm2c).